The sequence spans 188 residues: GTPase KRas (188 aa).

GTP contacts are provided by residues 10–18, 29–35, 59–60, and 116–119; these read GAGGVGKSA, VDEYDPT, AG, and NKCD. Positions 32–40 match the Effector region motif; it reads YDPTIEDSY. The tract at residues 168–188 is disordered; it reads EKMSKDGKKKKKKTKTKCIIM. Cys185 bears the Cysteine methyl ester mark. A lipid anchor (S-farnesyl cysteine) is attached at Cys185. Positions 186–188 are cleaved as a propeptide — removed in mature form; the sequence is IIM.

The protein belongs to the small GTPase superfamily. Ras family.

The protein resides in the cell membrane. The protein localises to the cytoplasm. The enzyme catalyses GTP + H2O = GDP + phosphate + H(+). Alternates between an inactive form bound to GDP and an active form bound to GTP. Activated by a guanine nucleotide-exchange factor (GEF) and inactivated by a GTPase-activating protein (GAP). Functionally, ras proteins bind GDP/GTP and possess intrinsic GTPase activity. Plays an important role in the regulation of cell proliferation. May play a role in promoting oncogenic events by inducing transcriptional silencing of tumor suppressor genes (TSGs). The protein is GTPase KRas (KRAS) of Meleagris gallopavo (Wild turkey).